A 201-amino-acid chain; its full sequence is Peptide deformylase (201 aa).

The Fe cation site is built by Cys121 and His163. Glu164 is an active-site residue. A Fe cation-binding site is contributed by His167.

This sequence belongs to the polypeptide deformylase family. Fe(2+) is required as a cofactor.

It catalyses the reaction N-terminal N-formyl-L-methionyl-[peptide] + H2O = N-terminal L-methionyl-[peptide] + formate. Its function is as follows. Removes the formyl group from the N-terminal Met of newly synthesized proteins. Requires at least a dipeptide for an efficient rate of reaction. N-terminal L-methionine is a prerequisite for activity but the enzyme has broad specificity at other positions. The polypeptide is Peptide deformylase (Synechococcus sp. (strain CC9605)).